A 326-amino-acid chain; its full sequence is MNSNQGTVGSDPVILATAGYDHTVRFWQAHSGICTRTVQHQDSQVNSLEVTPDRSMIAAAGYQHIRMYDLNSNNPNPVINYDGVSKNITSVGFHEDGRWMYTGGEDCMARIWDLRSRNLQCQRIFQVNAPINCVFLHPNQAELIVGDQSGAIHIWDLKTDQNEQLIPETDVSINSVHIDPDASYMAAVNSSGNCFVWNLTGGLGEDLTQLIPKTKIPAHKRCALKCKFSPDSTLLATCSADQTCKIWRTSNFSLMTELSIKSNNPGETSRGWMWDCAFSGDSQYIVTASSDNLARLWCVETGEIKREYSGHQKAVVCLAFNDSVLG.

WD repeat units follow at residues 1–37, 40–80, 83–122, 126–165, 168–207, 218–257, and 268–309; these read MNSN…CTRT, HQDS…PVIN, GVSK…LQCQ, QVNA…NEQL, ETDV…GEDL, AHKR…LMTE, and TSRG…REYS.

This sequence belongs to the WD repeat LST8 family. In terms of assembly, part of the mechanistic target of rapamycin complex 1 (mTORC1) which contains MTOR, MLST8 and RPTOR. Component of the mechanistic target of rapamycin complex 2 (mTORC2), consisting in two heterotretramers composed of MTOR, MLST8, RICTOR and MAPKAP1/SIN1.

It localises to the lysosome membrane. Its subcellular location is the cytoplasm. Subunit of both mTORC1 and mTORC2, which regulates cell growth and survival in response to nutrient and hormonal signals. mTORC1 is activated in response to growth factors or amino acids. In response to nutrients, mTORC1 is recruited to the lysosome membrane and promotes protein, lipid and nucleotide synthesis by phosphorylating several substrates, such as ribosomal protein S6 kinase (RPS6KB1 and RPS6KB2) and EIF4EBP1 (4E-BP1). In the same time, it inhibits catabolic pathways by phosphorylating the autophagy initiation components ULK1 and ATG13, as well as transcription factor TFEB, a master regulators of lysosomal biogenesis and autophagy. The mTORC1 complex is inhibited in response to starvation and amino acid depletion. Within mTORC1, MLST8 interacts directly with MTOR and enhances its kinase activity. In nutrient-poor conditions, stabilizes the MTOR-RPTOR interaction and favors RPTOR-mediated inhibition of MTOR activity. As part of the mTORC2 complex, transduces signals from growth factors to pathways involved in proliferation, cytoskeletal organization, lipogenesis and anabolic output. mTORC2 is also activated by growth factors, but seems to be nutrient-insensitive. In response to growth factors, mTORC2 phosphorylates and activates AGC protein kinase family members, including AKT (AKT1, AKT2 and AKT3), PKC (PRKCA, PRKCB and PRKCE) and SGK1. mTORC2 functions upstream of Rho GTPases to regulate the actin cytoskeleton, probably by activating one or more Rho-type guanine nucleotide exchange factors. mTORC2 promotes the serum-induced formation of stress-fibers or F-actin. Within mTORC2, MLST8 acts as a bridge between MAPKAP1/SIN1 and MTOR. In Xenopus tropicalis (Western clawed frog), this protein is Target of rapamycin complex subunit lst8 (mlst8).